Here is a 493-residue protein sequence, read N- to C-terminus: 6-aminohexanoate-cyclic-dimer hydrolase (493 aa).

Active-site charge relay system residues include K72 and S150. S174 (acyl-ester intermediate) is an active-site residue.

Belongs to the amidase family. In terms of assembly, homodimer.

It carries out the reaction 1,8-diazacyclotetradecane-2,9-dione + H2O = N-(6-aminohexanoyl)-6-aminohexanoate. Its pathway is xenobiotic degradation; nylon-6 oligomer degradation. Its function is as follows. Catalyzes the hydrolysis of 6-aminohexanoic acid cyclic dimer (1,8-diazacyclotetradecane-2,9-dione) to form the linear dimer 6-aminohexanoyl-6-aminohexanoic acid. This is 6-aminohexanoate-cyclic-dimer hydrolase (nylA) from Pseudomonas sp. (strain NK87).